Consider the following 73-residue polypeptide: Arabinogalactan protein 16 (73 aa).

An N-terminal signal peptide occupies residues methionine 1–alanine 26. Position 27 is a pyrrolidone carboxylic acid (glutamine 27). Residues proline 31, proline 33, and proline 35 each carry the 4-hydroxyproline modification. Proline 31, proline 33, and proline 35 each carry an O-linked (Ara...) hydroxyproline glycan. A lipid anchor (GPI-anchor amidated serine) is attached at serine 37. Residues aspartate 38–phenylalanine 73 constitute a propeptide, removed in mature form.

The protein belongs to the AG-peptide AGP family. In terms of processing, contains 4-hydroxyproline; hydroxylated on Pro-31, Pro-33 and Pro-35. Post-translationally, O-glycosylated on hydroxyprolines; noncontiguous hydroxylproline residues are glycosylated with arabinogalactan. As to expression, predominantly expressed in flowers.

Its subcellular location is the cell membrane. In terms of biological role, proteoglycan that seems to be implicated in diverse developmental roles such as differentiation, cell-cell recognition, embryogenesis and programmed cell death. The polypeptide is Arabinogalactan protein 16 (Arabidopsis thaliana (Mouse-ear cress)).